The sequence spans 381 residues: Trans-enoyl reductase iliB (381 aa).

50–53 (VDGK) contacts NADP(+). 145–152 (ATLATVGL) contacts substrate. NADP(+) is bound by residues 213–216 (SPGS), Tyr231, and 278–279 (LD). 298 to 302 (TYTQF) is a binding site for substrate. 367-368 (IS) is an NADP(+) binding site.

It belongs to the zinc-containing alcohol dehydrogenase family. In terms of assembly, monomer.

The catalysed reaction is N-[(4E,6E,10S,12Z,14E)-6,10-dimethyl-3-oxohexadeca-4,6,12,14-tetraenoyl]-L-tyrosyl-[ACP] = (3E,5S)-3-[(2E,4E,8S,10E,12Z)-1-hydroxy-4,8-dimethyltetradeca-2,4,10,12-tetraen-1-ylidene]-5-[(4-hydroxyphenyl)methyl]pyrrolidine-2,4-dione + holo-[ACP] + H(+). Its pathway is mycotoxin biosynthesis. Trans-enoyl reductase; part of the gene cluster that mediates the biosynthesis of ilicicolin H, a 4-hydroxy-2-pyridonealkaloid that has potent and broad antifungal activities by inhibiting the mitochondrial respiration chain. IliB collaborates with the hybrid PKS-NRPS synthetase iliA to assemble the backbone of ilicicolin H. The PKS portion of iliA and trans-acting enoyl reductase iliB work together to construct an octaketide, and two methyl groups are introduced by the MT domain of iliA during the chain assembly. The nascent chain is then condensed with tyrosine, catalyzed by the iliA C domain, and the resulting PKS-NRPS hybrid is offloaded by the iliA RED domain to form an advanced tetramic acid intermediate. The biosynthesis of ilicicolin H starts with formation of the tetramic acid by the hybrid PKS-NRPS synthetase iliA with the partnering trans-enoyl reductase iliB since iliA lacks a designated enoylreductase (ER) domain. The cytochrome P450 monooxygenase iliC then catalyzes the ring expansion of the tetramate to the acyclic 2-pyridone. The pericyclase iliD further converts the acyclic 2-pyridone into 8-epi-ilicicolin H. 8-epi-ilicicolin H might then spontaneously convert to ilicicolin H since ilicicolin H is produced in the absence of the epimerase iliE, in contrast to what was observed for the Talaromyces variabilis ilicolin H biosynthetic pathway. This Neonectria sp. (strain DH2) protein is Trans-enoyl reductase iliB.